Consider the following 248-residue polypeptide: Superoxide dismutase [Mn] 1 (248 aa).

Residues 1-41 form the signal peptide; the sequence is MQTTFRRILILFVGLLVPLFFACQSNSQVDAAPSAAPQLSA. H68, H123, D208, and H212 together coordinate Mn(2+).

The protein belongs to the iron/manganese superoxide dismutase family. As to quaternary structure, homodimer. Requires Mn(2+) as cofactor.

It catalyses the reaction 2 superoxide + 2 H(+) = H2O2 + O2. Destroys superoxide anion radicals which are normally produced within the cells and which are toxic to biological systems. The chain is Superoxide dismutase [Mn] 1 (sodA1) from Leptolyngbya boryana (Plectonema boryanum).